The sequence spans 461 residues: Zinc finger protein ZFP2 (461 aa).

13 C2H2-type zinc fingers span residues 102–124, 130–152, 158–180, 186–208, 214–236, 242–264, 270–292, 298–320, 326–348, 354–376, 382–404, 410–432, and 438–460; these read YECNQCSKTFSQSSSLLKHQRIH, YKCNVCGKHFIERSSLTVHQRIH, YKCNECGKAFSQSMNLTVHQRTH, YQCKECGKAFHKNSSLIQHERIH, YKCNECGKAFTQSMNLTVHQRTH, YECNECGKAFSQSMHLIVHQRSH, YECSQCGKAFSKSSTLTLHQRNH, YKCNKCGKSFSQSTYLIEHQRLH, FECNECGKAFSKNSSLTQHRRIH, YECMVCGKHFTGRSSLTVHQVIH, YECNECGKAFSQSAYLIEHQRIH, YECDQCGKAFIKNSSLTVHQRTH, and YQCNECGKAFSRSTNLTRHQRTH.

The protein belongs to the krueppel C2H2-type zinc-finger protein family.

It is found in the nucleus. Its function is as follows. Probable transcription factor involved in neuronal differentiation and/or phenotypic maintenance. This chain is Zinc finger protein ZFP2 (ZFP2), found in Homo sapiens (Human).